We begin with the raw amino-acid sequence, 101 residues long: Small ribosomal subunit protein bS18c (101 aa).

Belongs to the bacterial ribosomal protein bS18 family. Part of the 30S ribosomal subunit.

The protein localises to the plastid. It is found in the chloroplast. The polypeptide is Small ribosomal subunit protein bS18c (Morus indica (Mulberry)).